The following is a 114-amino-acid chain: Small ribosomal subunit protein bS16 (114 aa).

Residues 87–114 (AFREQPVQSAPKKKAQERAAERAKAAEA) form a disordered region. The segment covering 100–114 (KAQERAAERAKAAEA) has biased composition (basic and acidic residues).

Belongs to the bacterial ribosomal protein bS16 family.

This chain is Small ribosomal subunit protein bS16, found in Acidiphilium cryptum (strain JF-5).